A 1016-amino-acid polypeptide reads, in one-letter code: C2 domain-containing protein 5 (1016 aa).

Residues 1–109 (MPGKLKVKIV…EAATVISGWF (109 aa)) enclose the C2 domain. Ca(2+) contacts are provided by aspartate 19, aspartate 26, aspartate 76, aspartate 78, serine 81, and aspartate 84. Serine 197 carries the phosphoserine; by PKB/AKT2 modification. Residues serine 200 and serine 260 each carry the phosphoserine modification. The segment at 265 to 330 (LKEIPFNEDP…SGSAGKEGGP (66 aa)) is disordered. Over residues 274–289 (PNPNTHSSGPSTPLKN) the composition is skewed to polar residues. Residues 290 to 318 (QTYSFSPSKSYSRQSSSSDTDLSLTPKTG) are compositionally biased toward low complexity. Phosphoserine is present on residues serine 293, serine 295, serine 304, serine 305, and serine 306. Threonine 317 carries the phosphothreonine modification. Positions 319-328 (MGSGSAGKEG) are enriched in gly residues. Position 323 is a phosphoserine (serine 323). Residue threonine 601 is modified to Phosphothreonine. Residues 636-668 (VSEEMIGSPIPEPRQRSRLLRSQSESSDEVTEL) are disordered. Serine 643, serine 657, serine 659, serine 661, and serine 662 each carry phosphoserine. Threonine 666 carries the post-translational modification Phosphothreonine. Phosphoserine is present on residues serine 671, serine 817, and serine 869.

Ca(2+) is required as a cofactor. Post-translationally, phosphorylated on Ser-197 by active myristoylated kinase AKT2; insulin-stimulated phosphorylation by AKT2 regulates SLC2A4/GLUT4 translocation into the plasma membrane. In terms of tissue distribution, expressed in liver, muscle and fat.

It localises to the cytoplasmic vesicle membrane. The protein resides in the cytoplasm. The protein localises to the cell cortex. Its subcellular location is the cell membrane. It is found in the cell projection. It localises to the ruffle. Its function is as follows. Required for insulin-stimulated glucose transport and glucose transporter SLC2A4/GLUT4 translocation from intracellular glucose storage vesicle (GSV) to the plasma membrane (PM) in adipocytes. Binds phospholipid membranes in a calcium-dependent manner and is necessary for the optimal membrane fusion between SLC2A4/GLUT4 GSV and the PM. This chain is C2 domain-containing protein 5 (C2cd5), found in Mus musculus (Mouse).